A 700-amino-acid chain; its full sequence is Cap-specific mRNA (nucleoside-2'-O-)-methyltransferase 2 (700 aa).

Residues 1 to 21 (MSFRSSPQGKPHPMTDYQSIR) are disordered. The Adrift-type SAM-dependent 2'-O-MTase domain occupies 109–321 (EFVTVAWCKL…VYVICLNYNK (213 aa)). Lys-117 is a catalytic residue. 3 residues coordinate S-adenosyl-L-methionine: Gly-143, Trp-164, and Asp-234. The active site involves Asp-234. The active-site Proton acceptor is Lys-274.

Its subcellular location is the nucleus. The enzyme catalyses a 5'-end (N(7)-methyl 5'-triphosphoguanosine)-(2'-O-methyl-ribonucleoside)-(ribonucleotide) in mRNA + S-adenosyl-L-methionine = a 5'-end (N(7)-methyl 5'-triphosphoguanosine)-(2'-O-methyl-ribonucleoside)-(2'-O-methyl-ribonucleotide) in mRNA + S-adenosyl-L-homocysteine + H(+). Its function is as follows. Probable S-adenosyl-L-methionine-dependent methyltransferase that mediates mRNA cap2 2'-O-ribose methylation to the 5'-cap structure of mRNAs. May methylate the ribose of the second nucleotide of a m(7)GpppG-capped mRNA (cap0) to produce m(7)GpppRmpNm (cap2). Regulates expression of tracheal genes required for pathfinding on the segmental nerve. The sequence is that of Cap-specific mRNA (nucleoside-2'-O-)-methyltransferase 2 (cmtr2) from Drosophila melanogaster (Fruit fly).